Here is a 201-residue protein sequence, read N- to C-terminus: Dermatopontin (201 aa).

The N-terminal stretch at 1–18 (MDLTLLWVLLPLVTTAWG) is a signal peptide. Gln19 is subject to Pyrrolidone carboxylic acid. Residues 19-186 (QYGGYGYPYQ…AVERDRQWKF (168 aa)) are 2 X 53-55 AA tandem repeats. Tyr23 is subject to Sulfotyrosine. Repeat copies occupy residues 26 to 79 (PYQQ…ACMP), 70 to 75 (DRQWNY), 80 to 135 (TPQS…CCRY), and 125 to 130 (DREWQF). Cystine bridges form between Cys50–Cys77, Cys90–Cys132, Cys106–Cys133, Cys139–Cys196, and Cys143–Cys189. The segment at 70 to 186 (DRQWNYACMP…AVERDRQWKF (117 aa)) is 3 X 6 AA tandem repeats of D-R-[EQ]-W-[NQK]-[FY]. Tyr162, Tyr164, and Tyr167 each carry sulfotyrosine. A 2-3 repeat occupies 181 to 186 (DRQWKF). Tyr194 carries the sulfotyrosine modification.

The protein belongs to the dermatopontin family. Interacts with TGFB1, DCN and collagen. Sulfated on tyrosine residue(s).

Its subcellular location is the secreted. It is found in the extracellular space. The protein localises to the extracellular matrix. Seems to mediate adhesion by cell surface integrin binding. May serve as a communication link between the dermal fibroblast cell surface and its extracellular matrix environment. Enhances TGFB1 activity. Inhibits cell proliferation. Accelerates collagen fibril formation, and stabilizes collagen fibrils against low-temperature dissociation. The sequence is that of Dermatopontin (Dpt) from Mus musculus (Mouse).